The primary structure comprises 181 residues: TTTTYDRHFTTTQPHYRQDDRSRYDQQTHSQSTSRTLAIIALLPVGGILLGLAALTFIGTLIGLALATPLFVIFSPIIVPAVLTIGLAVTGFLASGTFGLTGLSSLSYLFNMVRQTAGSVPESLDYVKGTLQDAGEYAGQKTKDFGQKIQSTAHEMGDQGQVGVHAQVGGGKEGRKSGDRT.

Residues 1–28 form a disordered region; the sequence is TTTTYDRHFTTTQPHYRQDDRSRYDQQT. The tract at residues 1 to 38 is polar; the sequence is TTTTYDRHFTTTQPHYRQDDRSRYDQQTHSQSTSRTLA. Positions 16–26 are enriched in basic and acidic residues; it reads YRQDDRSRYDQ. Helical transmembrane passes span 38 to 58, 69 to 89, and 90 to 110; these read AIIA…LTFI, PLFV…GLAV, and TGFL…SYLF. Residues 39 to 110 form a hydrophobic region; sequence IIALLPVGGI…TGLSSLSYLF (72 aa). The tract at residues 155–181 is disordered; that stretch reads EMGDQGQVGVHAQVGGGKEGRKSGDRT. The segment covering 158–167 has biased composition (low complexity); it reads DQGQVGVHAQ. Positions 172–181 are enriched in basic and acidic residues; the sequence is KEGRKSGDRT.

The protein belongs to the oleosin family.

The protein resides in the lipid droplet. It is found in the membrane. Functionally, may have a structural role to stabilize the lipid body during desiccation of the seed by preventing coalescence of the oil. Probably interacts with both lipid and phospholipid moieties of lipid bodies. May also provide recognition signals for specific lipase anchorage in lipolysis during seedling growth. The polypeptide is Oleosin (Helianthus annuus (Common sunflower)).